Consider the following 620-residue polypeptide: MKQSKMIIPTLREMPSDASVISHALMLRAGYVRQISAGIYSYLPLANRVIEKAKNIMREEFDKIDAIEFLAPALLSADIWRESGRYETYGDDLYKLKNREGSDFILGPTHEETVTLLARDAVQSYKQLPLNIYQIQPKYRDEKRPRNGLLRGREFIMKDGYSFHASYESLDQTYDDYKAAYEAIFTRAGLEFKAIIGDGGAMGGKDSQEFMAITPDRTDLDRWVVLDKSVASFEEIPEDVLEAFKAELLAWSVSGEDTIAYSSESGYAANLEMATSEYKPSTAVVVEEDLVKVATPDAKTIDEVAAFLNVAEEQTIKTMLFMADGEPVVALLVGNDQVNDVKLKNHLAADFFDVASPADAEKVFGAGFGSLGPVGLPENIKIIADRKVQDVKNAVVGANEDGFHYTGANAGRDFQVTEYVDIREVKEGEPSPDGHGVLNFARGIEIGHIFKLGTRYSDSMNANILDENGRSMPIIMGCYGIGVSRLLSAVLEQHARLFVNKTPKGEYRYAWGINFPKELAPFDVHLIPVNVKDEAAMELTQSIEASLVGAGYEVLTDDRNERVGVKFSDSDLIGLPIRVTVGKKAADGIVEVKIKGTGDTVEVHVDQLLETLQILTKENE.

This sequence belongs to the class-II aminoacyl-tRNA synthetase family. ProS type 1 subfamily. As to quaternary structure, homodimer.

It is found in the cytoplasm. It catalyses the reaction tRNA(Pro) + L-proline + ATP = L-prolyl-tRNA(Pro) + AMP + diphosphate. Its function is as follows. Catalyzes the attachment of proline to tRNA(Pro) in a two-step reaction: proline is first activated by ATP to form Pro-AMP and then transferred to the acceptor end of tRNA(Pro). As ProRS can inadvertently accommodate and process non-cognate amino acids such as alanine and cysteine, to avoid such errors it has two additional distinct editing activities against alanine. One activity is designated as 'pretransfer' editing and involves the tRNA(Pro)-independent hydrolysis of activated Ala-AMP. The other activity is designated 'posttransfer' editing and involves deacylation of mischarged Ala-tRNA(Pro). The misacylated Cys-tRNA(Pro) is not edited by ProRS. This chain is Proline--tRNA ligase, found in Streptococcus suis (strain 98HAH33).